We begin with the raw amino-acid sequence, 310 residues long: MTQPIVVAALYKFVTLEDYAELREPLLKAMLDNGVKGTLLLANEGINGTVSATREGIDGLLTWLRSDPRLVDVDHKESYCDEQPFYRTKVKLKKEIVTLGVPGVDPNNAVGTYVEPKDWNALISDPEVLLIDTRNDYEVAIGTFKGAIDPKTETFREFPEYIKANFDPSKHKKVAMFCTGGIRCEKASSYMLGEGFEAVYHLKGGILKYFEEVPQEESLWDGDCFVFDNRVTVRHDLTEGEYDQCHACRHPVNAQDRASEHYSPGVSCPHCWDSLSEKTRRSAIDRQKQIELAKARNLPHPIGYNYKAEA.

The 95-residue stretch at 124–218 folds into the Rhodanese domain; that stretch reads SDPEVLLIDT…YFEEVPQEES (95 aa). Catalysis depends on Cys178, which acts as the Cysteine persulfide intermediate.

The protein belongs to the TrhO family.

The enzyme catalyses uridine(34) in tRNA + AH2 + O2 = 5-hydroxyuridine(34) in tRNA + A + H2O. In terms of biological role, catalyzes oxygen-dependent 5-hydroxyuridine (ho5U) modification at position 34 in tRNAs. The polypeptide is tRNA uridine(34) hydroxylase (Pseudomonas putida (strain W619)).